Here is a 593-residue protein sequence, read N- to C-terminus: Metal-response element-binding transcription factor 2 (593 aa).

The segment at 1–35 (MRDSTGAGNSLVHKRSPLRRNQKTPTSLTKLSLQD) is disordered. Over residues 12–22 (VHKRSPLRRNQ) the composition is skewed to basic residues. The segment covering 23 to 32 (KTPTSLTKLS) has biased composition (polar residues). Threonine 24 bears the Phosphothreonine mark. One can recognise a Tudor domain in the interval 44 to 101 (CKFEEGQDVLARWSDGLFYLGTIKKINILKQSCFIIFEDSSKSWVLWKDIQTGATGSG). 2 consecutive PHD-type zinc fingers follow at residues 102–157 (EMVC…CVFA) and 201–255 (QCYC…CSSG). Residue lysine 360 forms a Glycyl lysine isopeptide (Lys-Gly) (interchain with G-Cter in SUMO2) linkage. The span at 360 to 374 (KAEKEPEGTSHEFKI) shows a compositional bias: basic and acidic residues. 2 disordered regions span residues 360–411 (KAEK…PYTR) and 424–486 (KESI…TRTG). Over residues 445-454 (TAHSSNTSDV) the composition is skewed to polar residues. Position 452 is a phosphoserine (serine 452). Low complexity predominate over residues 459-471 (ASSAKETTSSSIS). Lysine 522 is covalently cross-linked (Glycyl lysine isopeptide (Lys-Gly) (interchain with G-Cter in SUMO2)).

The protein belongs to the Polycomblike family. Associates with the PRC2 complex, which consists of the core components EED, EZH1 or EZH2, SUZ12, and RBBP4, and various combinations of accessory subunits including AEBP2, JARID2, PHF19, MTF2 and EPOP. Forms a dimeric PRC2.1 (class 1, PRC-PCL) complex consisting of at least SUZ12, RBBP4, and PHF19 or MTF2; PHF19 and MTF2 stabilize the dimeric structure which enhances PRC2 interaction with chromatin.

It is found in the nucleus. Its function is as follows. Polycomb group (PcG) protein that specifically binds histone H3 trimethylated at 'Lys-36' (H3K36me3) and recruits the PRC2 complex, thus enhancing PRC2 H3K27me3 methylation activity. Regulates the transcriptional networks during embryonic stem cell self-renewal and differentiation. Promotes recruitment of the PRC2 complex to the inactive X chromosome in differentiating XX ES cells and PRC2 recruitment to target genes in undifferentiated ES cells. Required to repress Hox genes by enhancing H3K27me3 methylation of the PRC2 complex. In some conditions may act as an inhibitor of PRC2 activity: able to activate the CDKN2A gene and promote cellular senescence by suppressing the catalytic activity of the PRC2 complex locally. Binds to the metal-regulating-element (MRE) of MT1A gene promoter. The protein is Metal-response element-binding transcription factor 2 (MTF2) of Homo sapiens (Human).